A 281-amino-acid chain; its full sequence is Undecaprenyl-diphosphatase (281 aa).

8 consecutive transmembrane segments (helical) span residues M1–I21, W45–A65, S93–F113, L125–V145, I155–A175, A195–F215, F227–F247, and S256–F276.

This sequence belongs to the UppP family.

It localises to the cell inner membrane. It carries out the reaction di-trans,octa-cis-undecaprenyl diphosphate + H2O = di-trans,octa-cis-undecaprenyl phosphate + phosphate + H(+). Functionally, catalyzes the dephosphorylation of undecaprenyl diphosphate (UPP). Confers resistance to bacitracin. This Syntrophobacter fumaroxidans (strain DSM 10017 / MPOB) protein is Undecaprenyl-diphosphatase.